The chain runs to 479 residues: Ribosomal RNA small subunit methyltransferase F (479 aa).

S-adenosyl-L-methionine-binding positions include 125 to 131 (AAAPGSK), glutamate 149, aspartate 176, and aspartate 194. Cysteine 247 acts as the Nucleophile in catalysis.

Belongs to the class I-like SAM-binding methyltransferase superfamily. RsmB/NOP family.

It localises to the cytoplasm. It catalyses the reaction cytidine(1407) in 16S rRNA + S-adenosyl-L-methionine = 5-methylcytidine(1407) in 16S rRNA + S-adenosyl-L-homocysteine + H(+). Its function is as follows. Specifically methylates the cytosine at position 1407 (m5C1407) of 16S rRNA. The chain is Ribosomal RNA small subunit methyltransferase F from Salmonella paratyphi A (strain ATCC 9150 / SARB42).